Consider the following 110-residue polypeptide: Cyclin-dependent protein kinase inhibitor SMR8 (110 aa).

Interacts with CDKA-1 and D-type cyclins. Expressed in the root vascular tissue.

Probable cyclin-dependent protein kinase (CDK) inhibitor that functions as a repressor of mitosis in the endoreduplication cell cycle. The chain is Cyclin-dependent protein kinase inhibitor SMR8 from Arabidopsis thaliana (Mouse-ear cress).